Consider the following 132-residue polypeptide: MALLLTMVIALTCLGGFASPSPVPPSTALKELIEELVNITQNQKAPLCNGSMVWSINLTAGVYCAALESLINVSGCSAIEKTQRMLNGFCPHKVSAGQFSSLRVRDTKIEVAQFVKDLLLHLKKLFREGQFN.

Residues 1–18 (MALLLTMVIALTCLGGFA) form the signal peptide. 4 N-linked (GlcNAc...) asparagine glycosylation sites follow: N38, N49, N57, and N72. 2 disulfide bridges follow: C48–C76 and C64–C90.

The protein belongs to the IL-4/IL-13 family. Interacts with IL13RA2.

Its subcellular location is the secreted. Functionally, cytokine that plays important roles in allergic inflammation and immune response to parasite infection. Synergizes with IL2 in regulating interferon-gamma synthesis. Stimulates B-cell proliferation, and activation of eosinophils, basophils, and mast cells. Plays an important role in controlling IL33 activity by modulating the production of transmembrane and soluble forms of interleukin-1 receptor-like 1/IL1RL1. Displays the capacity to antagonize Th1-driven proinflammatory immune response and downregulates synthesis of many proinflammatory cytokines including IL1, IL6, IL10, IL12 and TNF-alpha through a mechanism that partially involves suppression of NF-kappa-B. Also functions on nonhematopoietic cells, including endothelial cells where it induces vascular cell adhesion protein 1/VCAM1, which is important in the recruitment of eosinophils. Exerts its biological effects through its receptors which comprises the IL4R chain and the IL13RA1 chain, to activate JAK1 and TYK2, leading to the activation of STAT6. Aside from IL13RA1, another receptor IL13RA2 acts as a high affinity decoy for IL13 and mediates internalization and depletion of extracellular IL13. The chain is Interleukin-13 (IL13) from Macaca thibetana (Pere David's macaque).